The chain runs to 146 residues: Putative pre-16S rRNA nuclease (146 aa).

The protein belongs to the YqgF nuclease family.

The protein resides in the cytoplasm. Could be a nuclease involved in processing of the 5'-end of pre-16S rRNA. The sequence is that of Putative pre-16S rRNA nuclease from Pseudomonas syringae pv. syringae (strain B728a).